The sequence spans 708 residues: O-antigen chain terminator bifunctional methyltransferase/kinase WbdD (708 aa).

The interval 1–210 (MTKDLNTLVS…VPRPMYLVSN (210 aa)) is methyltransferase. S-adenosyl-L-methionine contacts are provided by residues 16-17 (YQ), arginine 36, glycine 61, 82-87 (DFQQEN), 108-111 (GRIE), and leucine 128. Positions 211–459 (HRVLINDFNQ…AKLPSAEQQR (249 aa)) are kinase. Residues proline 229, histidine 237, 241-243 (RRY), lysine 252, glutamate 274, 309-311 (EKL), methionine 358, and aspartate 369 each bind ATP. Residues 485–594 (AGSEALRGQI…EIEKIHRSRS (110 aa)) adopt a coiled-coil conformation. Positions 601 to 669 (YRYLGLQIHL…RLYRRMNPLP (69 aa)) are required for membrane-binding. A required for localizing WbdA to the membrane region spans residues 687–708 (VMHPELLPPEVYEIYLKLTKNK).

Belongs to the WbdD family. As to quaternary structure, interacts with WbdA.

Its subcellular location is the cell inner membrane. The catalysed reaction is 3-O-phospho-alpha-D-Man-(1-&gt;2)-alpha-D-Man-(1-&gt;2)-[alpha-D-Man-(1-&gt;3)-alpha-D-Man-(1-&gt;3)-alpha-D-Man-(1-&gt;2)-alpha-D-Man-(1-&gt;2)](n)-alpha-D-Man-(1-&gt;3)-alpha-D-Man-(1-&gt;3)-alpha-D-Man-(1-&gt;3)-alpha-D-GlcNAc-di-trans,octa-cis-undecaprenyl diphosphate + S-adenosyl-L-methionine = 3-O-methylphospho-alpha-D-Man-(1-&gt;2)-alpha-D-Man-(1-&gt;2)-[alpha-D-Man-(1-&gt;3)-alpha-D-Man-(1-&gt;3)-alpha-D-Man-(1-&gt;2)-alpha-D-Man-(1-&gt;2)](n)-alpha-D-Man-(1-&gt;3)-alpha-D-Man-(1-&gt;3)-alpha-D-Man-(1-&gt;3)-alpha-D-GlcNAc-di-trans,octa-cis-undecaprenyl diphosphate + S-adenosyl-L-homocysteine. The enzyme catalyses alpha-D-Man-(1-&gt;2)-alpha-D-Man-(1-&gt;2)-[alpha-D-Man-(1-&gt;3)-alpha-D-Man-(1-&gt;3)-alpha-D-Man-(1-&gt;2)-alpha-D-Man-(1-&gt;2)](n)-alpha-D-Man-(1-&gt;3)-alpha-D-Man-(1-&gt;3)-alpha-D-Man-(1-&gt;3)-alpha-D-GlcNAc-di-trans,octa-cis-undecaprenyl diphosphate + ATP = 3-O-phospho-alpha-D-Man-(1-&gt;2)-alpha-D-Man-(1-&gt;2)-[alpha-D-Man-(1-&gt;3)-alpha-D-Man-(1-&gt;3)-alpha-D-Man-(1-&gt;2)-alpha-D-Man-(1-&gt;2)](n)-alpha-D-Man-(1-&gt;3)-alpha-D-Man-(1-&gt;3)-alpha-D-Man-(1-&gt;3)-alpha-D-GlcNAc-di-trans,octa-cis-undecaprenyl diphosphate + ADP + H(+). Its pathway is bacterial outer membrane biogenesis; LPS O-antigen biosynthesis. Regulates the length of the LPS O-antigen polysaccharide chain. Stops the polymerization of the chain by phosphorylating and then methylating the phosphate on the terminal sugar. This terminal modification is essential for export of the O-antigen across the inner membrane. WbdD is also required for correct localization of the WbdA mannosyltransferase. The sequence is that of O-antigen chain terminator bifunctional methyltransferase/kinase WbdD from Escherichia coli.